Here is a 339-residue protein sequence, read N- to C-terminus: Serine/threonine-protein kinase SAPK2 (339 aa).

The Protein kinase domain maps to tyrosine 4 to phenylalanine 260. ATP-binding positions include isoleucine 10–alanine 18 and lysine 33. Aspartate 123 functions as the Proton acceptor in the catalytic mechanism. The C-terminal stretch occupies residues glutamate 253–leucine 339.

The protein belongs to the protein kinase superfamily. Ser/Thr protein kinase family. In terms of assembly, interacts with BZIP46. Interacts with ABI5 and PP2C30. Interacts with PP2C51. In terms of processing, phosphorylated. As to expression, expressed in leaf blades, leaf sheaths and roots. Expressed in shoots and roots of young seedlings.

It is found in the cytoplasm. The protein resides in the nucleus. The catalysed reaction is L-seryl-[protein] + ATP = O-phospho-L-seryl-[protein] + ADP + H(+). It carries out the reaction L-threonyl-[protein] + ATP = O-phospho-L-threonyl-[protein] + ADP + H(+). With respect to regulation, activated by phosphorylation in response to hyperosmotic stress within 5 minutes. May play a role in signal transduction of hyperosmotic response. Can phosphorylate BZIP46 in vitro. Together with ABI5, PP2C30 and PYL5, is part of an abscisic acid (ABA) signaling unit that modulates seed germination and early seedling growth. This Oryza sativa subsp. japonica (Rice) protein is Serine/threonine-protein kinase SAPK2 (SAPK2).